Consider the following 195-residue polypeptide: Capsid protein (195 aa).

The segment at 148 to 195 (NAPILSTLPETTVVRRRGRSPRRRTPSPRRRRSPSPRRRRSQSRESQC) is disordered. The span at 161-188 (VRRRGRSPRRRTPSPRRRRSPSPRRRRS) shows a compositional bias: basic residues. Serine 167, serine 174, and serine 182 each carry phosphoserine; by host. The 1; half-length repeat unit spans residues 167 to 172 (SPRRRT). The segment at 167 to 188 (SPRRRTPSPRRRRSPSPRRRRS) is 3 X 7 AA repeats of S-P-R-R-R-[PR]-S. Positions 170-187 (RRTPSPRRRRSPSPRRRR) match the Bipartite nuclear localization signal motif. 2 repeat units span residues 174-180 (SPRRRRS) and 182-188 (SPRRRRS). The segment at 189 to 195 (QSRESQC) is RNA binding.

It belongs to the orthohepadnavirus core antigen family. In terms of assembly, homodimerizes, then multimerizes. Interacts with cytosol exposed regions of viral L glycoprotein present in the reticulum-to-Golgi compartment. Interacts with human FLNB. Phosphorylated form interacts with host importin alpha; this interaction depends on the exposure of the NLS, which itself depends upon genome maturation and/or phosphorylation of the capsid protein. Interacts with host NUP153. Post-translationally, phosphorylated by host SRPK1, SRPK2, and maybe protein kinase C or GAPDH. Phosphorylation is critical for pregenomic RNA packaging. Protein kinase C phosphorylation is stimulated by HBx protein and may play a role in transport of the viral genome to the nucleus at the late step during the viral replication cycle.

It is found in the virion. It localises to the host cytoplasm. Its function is as follows. Self assembles to form an icosahedral capsid. Most capsids appear to be large particles with an icosahedral symmetry of T=4 and consist of 240 copies of capsid protein, though a fraction forms smaller T=3 particles consisting of 180 capsid proteins. Entering capsids are transported along microtubules to the nucleus. Phosphorylation of the capsid is thought to induce exposure of nuclear localization signal in the C-terminal portion of the capsid protein that allows binding to the nuclear pore complex via the importin (karyopherin-) alpha and beta. Capsids are imported in intact form through the nuclear pore into the nuclear basket, where it probably binds NUP153. Only capsids that contain the mature viral genome can release the viral DNA and capsid protein into the nucleoplasm. Immature capsids get stuck in the basket. Capsids encapsulate the pre-genomic RNA and the P protein. Pre-genomic RNA is reverse-transcribed into DNA while the capsid is still in the cytoplasm. The capsid can then either be directed to the nucleus, providing more genomes for transcription, or bud through the endoplasmic reticulum to provide new virions. This chain is Capsid protein, found in Homo sapiens (Human).